Here is a 305-residue protein sequence, read N- to C-terminus: Translation initiation factor eIF2B subunit alpha (305 aa).

Ser2 carries the N-acetylserine modification. Thr291 is subject to Phosphothreonine.

The protein belongs to the eIF-2B alpha/beta/delta subunits family. As to quaternary structure, component of the translation initiation factor 2B (eIF2B) complex which is a heterodecamer of two sets of five different subunits: alpha, beta, gamma, delta and epsilon. Subunits alpha, beta and delta comprise a regulatory subcomplex and subunits epsilon and gamma comprise a catalytic subcomplex. Within the complex, the hexameric regulatory complex resides at the center, with the two heterodimeric catalytic subcomplexes bound on opposite sides.

The protein resides in the cytoplasm. Its subcellular location is the cytosol. Acts as a component of the translation initiation factor 2B (eIF2B) complex, which catalyzes the exchange of GDP for GTP on the eukaryotic initiation factor 2 (eIF2) complex gamma subunit. Its guanine nucleotide exchange factor activity is repressed when bound to eIF2 complex phosphorylated on the alpha subunit, thereby limiting the amount of methionyl-initiator methionine tRNA available to the ribosome and consequently global translation is repressed. It activates the translation of GCN4 in response to low amino acid, carbon, or purine availability, by suppressing the inhibitory effects of multiple uORFs present in the leader of GCN4 mRNA. It may promote either repression or activation of GCN4 expression depending on amino acid availability. Modulation of GCN3 regulatory function in response to amino acid availability occurs post-translationally. This Saccharomyces cerevisiae (strain ATCC 204508 / S288c) (Baker's yeast) protein is Translation initiation factor eIF2B subunit alpha.